The primary structure comprises 929 residues: ATP-dependent DNA helicase PIF1 (929 aa).

A mitochondrion-targeting transit peptide spans 1 to 52; sequence MLRRLLQPAYNVALSGTSASTLPRKSASVGLVRTALMPVDYNAGALFCAMRF. The disordered stretch occupies residues 55–89; the sequence is GTEKERKREPKRGSKRRSKATTTLSTPTDAQTSVT. The span at 56–66 shows a compositional bias: basic and acidic residues; that stretch reads TEKERKREPKR. Positions 74-89 are enriched in polar residues; it reads ATTTLSTPTDAQTSVT. ATP is bound at residue 302–309; it reads GSAGTGKT. Residues 776–796 mediate DNA binding; that stretch reads HLLYVAMSRVRNPEQLSMSSF. A disordered region spans residues 902–929; it reads HERRQKKMAVEGAKQTDTTKASSGESLE. Over residues 916–929 the composition is skewed to polar residues; sequence QTDTTKASSGESLE.

It belongs to the helicase family. PIF1 subfamily. In terms of assembly, monomer. Requires Mg(2+) as cofactor.

It localises to the mitochondrion. It catalyses the reaction Couples ATP hydrolysis with the unwinding of duplex DNA at the replication fork by translocating in the 5'-3' direction. This creates two antiparallel DNA single strands (ssDNA). The leading ssDNA polymer is the template for DNA polymerase III holoenzyme which synthesizes a continuous strand.. It carries out the reaction ATP + H2O = ADP + phosphate + H(+). Functionally, DNA-dependent ATPase and probable 5'-3' DNA helicase required for the maintenance of mitochondrial (kinetoplast) genome stability. Essential for replication of kinetoplast minicircles. Involved in the segregation of minicircle progeny. This Trypanosoma brucei brucei (strain 927/4 GUTat10.1) protein is ATP-dependent DNA helicase PIF1.